Here is a 90-residue protein sequence, read N- to C-terminus: Acylphosphatase (90 aa).

An Acylphosphatase-like domain is found at 3–90 (QRQFTVYGCV…RVFSDFTIER (88 aa)). Active-site residues include Arg18 and Asn36.

The protein belongs to the acylphosphatase family.

The enzyme catalyses an acyl phosphate + H2O = a carboxylate + phosphate + H(+). The chain is Acylphosphatase (acyP) from Actinobacillus succinogenes (strain ATCC 55618 / DSM 22257 / CCUG 43843 / 130Z).